Here is a 39-residue protein sequence, read N- to C-terminus: Large ribosomal subunit protein bL36 (39 aa).

Belongs to the bacterial ribosomal protein bL36 family.

The chain is Large ribosomal subunit protein bL36 from Leuconostoc mesenteroides subsp. mesenteroides (strain ATCC 8293 / DSM 20343 / BCRC 11652 / CCM 1803 / JCM 6124 / NCDO 523 / NBRC 100496 / NCIMB 8023 / NCTC 12954 / NRRL B-1118 / 37Y).